The sequence spans 353 residues: tRNA-specific 2-thiouridylase MnmA 2 (353 aa).

6–13 (LLSGGVDS) contacts ATP. The interval 92-94 (NPD) is interaction with target base in tRNA. C97 acts as the Nucleophile in catalysis. The cysteines at positions 97 and 192 are disulfide-linked. Residue G120 participates in ATP binding. The tract at residues 142–144 (KDQ) is interaction with tRNA. C192 serves as the catalytic Cysteine persulfide intermediate.

It belongs to the MnmA/TRMU family.

It localises to the cytoplasm. The enzyme catalyses S-sulfanyl-L-cysteinyl-[protein] + uridine(34) in tRNA + AH2 + ATP = 2-thiouridine(34) in tRNA + L-cysteinyl-[protein] + A + AMP + diphosphate + H(+). In terms of biological role, catalyzes the 2-thiolation of uridine at the wobble position (U34) of tRNA, leading to the formation of s(2)U34. This Bacteroides fragilis (strain ATCC 25285 / DSM 2151 / CCUG 4856 / JCM 11019 / LMG 10263 / NCTC 9343 / Onslow / VPI 2553 / EN-2) protein is tRNA-specific 2-thiouridylase MnmA 2.